The following is a 124-amino-acid chain: S-adenosylmethionine decarboxylase proenzyme (124 aa).

S63 acts as the Schiff-base intermediate with substrate; via pyruvic acid in catalysis. At S63 the chain carries Pyruvic acid (Ser); by autocatalysis. Residue H68 is the Proton acceptor; for processing activity of the active site. Residue C83 is the Proton donor; for catalytic activity of the active site.

This sequence belongs to the prokaryotic AdoMetDC family. Type 1 subfamily. In terms of assembly, heterotetramer of two alpha and two beta chains arranged as a dimer of alpha/beta heterodimers. Requires pyruvate as cofactor. Post-translationally, is synthesized initially as an inactive proenzyme. Formation of the active enzyme involves a self-maturation process in which the active site pyruvoyl group is generated from an internal serine residue via an autocatalytic post-translational modification. Two non-identical subunits are generated from the proenzyme in this reaction, and the pyruvate is formed at the N-terminus of the alpha chain, which is derived from the carboxyl end of the proenzyme. The post-translation cleavage follows an unusual pathway, termed non-hydrolytic serinolysis, in which the side chain hydroxyl group of the serine supplies its oxygen atom to form the C-terminus of the beta chain, while the remainder of the serine residue undergoes an oxidative deamination to produce ammonia and the pyruvoyl group blocking the N-terminus of the alpha chain.

The catalysed reaction is S-adenosyl-L-methionine + H(+) = S-adenosyl 3-(methylsulfanyl)propylamine + CO2. Its pathway is amine and polyamine biosynthesis; S-adenosylmethioninamine biosynthesis; S-adenosylmethioninamine from S-adenosyl-L-methionine: step 1/1. Catalyzes the decarboxylation of S-adenosylmethionine to S-adenosylmethioninamine (dcAdoMet), the propylamine donor required for the synthesis of the polyamines spermine and spermidine from the diamine putrescine. The chain is S-adenosylmethionine decarboxylase proenzyme from Geobacillus sp. (strain WCH70).